An 84-amino-acid polypeptide reads, in one-letter code: Dihydroneopterin aldolase (84 aa).

Substrate-binding positions include Glu22, Tyr54, and 73–74 (IE).

It belongs to the DHNA family.

It carries out the reaction 7,8-dihydroneopterin = 6-hydroxymethyl-7,8-dihydropterin + glycolaldehyde. The enzyme catalyses 7,8-dihydroneopterin = 7,8-dihydromonapterin. Its pathway is cofactor biosynthesis; tetrahydrofolate biosynthesis; 2-amino-4-hydroxy-6-hydroxymethyl-7,8-dihydropteridine diphosphate from 7,8-dihydroneopterin triphosphate: step 3/4. Functionally, catalyzes the conversion of 7,8-dihydroneopterin to 6-hydroxymethyl-7,8-dihydropterin. Can also catalyze the epimerization of carbon 2' of dihydroneopterin to dihydromonapterin. The sequence is that of Dihydroneopterin aldolase (folB) from Staphylococcus haemolyticus.